We begin with the raw amino-acid sequence, 425 residues long: Multifunctional CCA protein (425 aa).

ATP-binding residues include Gly-8 and Arg-11. 2 residues coordinate CTP: Gly-8 and Arg-11. Asp-21 and Asp-23 together coordinate Mg(2+). ATP contacts are provided by Arg-91, Arg-141, and Arg-144. Residues Arg-91, Arg-141, and Arg-144 each coordinate CTP. One can recognise an HD domain in the interval 230–331 (TGVHLMMVLD…VRLLERCDAI (102 aa)).

Belongs to the tRNA nucleotidyltransferase/poly(A) polymerase family. Bacterial CCA-adding enzyme type 1 subfamily. In terms of assembly, monomer. Can also form homodimers and oligomers. Mg(2+) serves as cofactor. The cofactor is Ni(2+).

It carries out the reaction a tRNA precursor + 2 CTP + ATP = a tRNA with a 3' CCA end + 3 diphosphate. It catalyses the reaction a tRNA with a 3' CCA end + 2 CTP + ATP = a tRNA with a 3' CCACCA end + 3 diphosphate. Functionally, catalyzes the addition and repair of the essential 3'-terminal CCA sequence in tRNAs without using a nucleic acid template. Adds these three nucleotides in the order of C, C, and A to the tRNA nucleotide-73, using CTP and ATP as substrates and producing inorganic pyrophosphate. tRNA 3'-terminal CCA addition is required both for tRNA processing and repair. Also involved in tRNA surveillance by mediating tandem CCA addition to generate a CCACCA at the 3' terminus of unstable tRNAs. While stable tRNAs receive only 3'-terminal CCA, unstable tRNAs are marked with CCACCA and rapidly degraded. The chain is Multifunctional CCA protein from Acidovorax ebreus (strain TPSY) (Diaphorobacter sp. (strain TPSY)).